The following is a 382-amino-acid chain: O-methyltransferase okaF (382 aa).

Positions 249 and 287 each coordinate S-adenosyl-L-methionine. The active-site Proton acceptor is the H291.

The protein belongs to the class I-like SAM-binding methyltransferase superfamily. Cation-independent O-methyltransferase family.

The enzyme catalyses 3-desmethyl okaramine B + S-adenosyl-L-methionine = okaramine B + S-adenosyl-L-homocysteine + H(+). It participates in alkaloid biosynthesis. O-methyltransferase; part of the gene cluster that mediates the biosynthesis of okaramine B, a prenylated indole alkaloid that possesses an unusual octacyclic ring system, including a four-membered azetidine ring and an eight-membered azocine ring, and that exhibits insecticidal activity against silkworm larvae. Within the pathway, okaF catalyzes the last step which is the methylation of 3-desmethyl okaramine B to produce okaramine B. With okaG, OkaF is also able to produce okaramine D from okaramine E. The biosynthesis begins with the NRPS okaA that condenses two tryptophan molecules into cyclo(L-Trp-L-Trp). Prenylation by the prenyltransferase okaC then leads to the formation of cyclo(N8-(alpha,alpha-dimethylallyl)-L-Trp-6a-(alpha,alpha-dime-thylallyl)-L-Trp). This is followed by indole 2,3-epoxidation by the FAD-dependent monooxygenase okaB to facilitate the formation of the hexahydropyrrolo[2,3-b]indole (HPI) moiety of okaramine C. The cytochrome P450 monooxygenase okaD then likely catalyzes formation of the eight-membered ring of okaramine A. The dioxygenase okaE further forms the unusual 2-dimethyl-3-methyl-azetidine ring to yield 12-deshydroxyl okaramine E, as well as the hydroxylation of 12-deshydroxyl okaramine E to produce okaramine E. The cytochrome P450 monoxygenase okaG converts 12-deshydroxyl okaramine E into 3-desmethyl okaramine B which is further methylated by the methyltransferase okaF into okaramine B. In a shunt pathway, okaG and okaF together are also able to convert okaramine E into okaramine D. Okaramine H is produced by nonenzymatic conversion from okaramine A. The chain is O-methyltransferase okaF from Penicillium ochrochloron.